We begin with the raw amino-acid sequence, 675 residues long: Potassium-transporting ATPase ATP-binding subunit (675 aa).

Helical transmembrane passes span Val38–Val58, Leu67–Ala87, Ile216–Leu236, and Ile253–Ile273. The 4-aspartylphosphate intermediate role is filled by Asp304. ATP is bound by residues Asp341, Glu345, Phe371–Ser378, and Lys389. Positions 512 and 516 each coordinate Mg(2+). 3 helical membrane-spanning segments follow: residues Phe582–Met602, Ala610–Leu630, and Gly654–Met674.

The protein belongs to the cation transport ATPase (P-type) (TC 3.A.3) family. Type IA subfamily. As to quaternary structure, the system is composed of three essential subunits: KdpA, KdpB and KdpC.

It localises to the cell membrane. It carries out the reaction K(+)(out) + ATP + H2O = K(+)(in) + ADP + phosphate + H(+). Part of the high-affinity ATP-driven potassium transport (or Kdp) system, which catalyzes the hydrolysis of ATP coupled with the electrogenic transport of potassium into the cytoplasm. This subunit is responsible for energy coupling to the transport system and for the release of the potassium ions to the cytoplasm. This chain is Potassium-transporting ATPase ATP-binding subunit, found in Deinococcus radiodurans (strain ATCC 13939 / DSM 20539 / JCM 16871 / CCUG 27074 / LMG 4051 / NBRC 15346 / NCIMB 9279 / VKM B-1422 / R1).